The chain runs to 147 residues: Large ribosomal subunit protein uL13 (147 aa).

The protein belongs to the universal ribosomal protein uL13 family. In terms of assembly, part of the 50S ribosomal subunit.

This protein is one of the early assembly proteins of the 50S ribosomal subunit, although it is not seen to bind rRNA by itself. It is important during the early stages of 50S assembly. In Lactobacillus acidophilus (strain ATCC 700396 / NCK56 / N2 / NCFM), this protein is Large ribosomal subunit protein uL13.